Reading from the N-terminus, the 169-residue chain is Shikimate kinase (169 aa).

An ATP-binding site is contributed by 12-17; sequence GAGKST. Serine 16 serves as a coordination point for Mg(2+). Positions 34, 58, and 80 each coordinate substrate. ATP is bound at residue arginine 117. Arginine 136 is a substrate binding site.

It belongs to the shikimate kinase family. In terms of assembly, monomer. Mg(2+) is required as a cofactor.

It is found in the cytoplasm. The enzyme catalyses shikimate + ATP = 3-phosphoshikimate + ADP + H(+). Its pathway is metabolic intermediate biosynthesis; chorismate biosynthesis; chorismate from D-erythrose 4-phosphate and phosphoenolpyruvate: step 5/7. Functionally, catalyzes the specific phosphorylation of the 3-hydroxyl group of shikimic acid using ATP as a cosubstrate. This is Shikimate kinase from Rhodococcus erythropolis (strain PR4 / NBRC 100887).